The sequence spans 732 residues: Catalase-peroxidase (732 aa).

A signal peptide spans 1–15 (MSTESKCPFAGGAYA). Residues 96–219 (WHSAGTYRIY…LGAVQMGLIY (124 aa)) constitute a cross-link (tryptophyl-tyrosyl-methioninium (Trp-Tyr) (with M-245)). The Proton acceptor role is filled by His-97. Residues 219 to 245 (YVNPEGPNGNPDPLASARDIRETFARM) constitute a cross-link (tryptophyl-tyrosyl-methioninium (Tyr-Met) (with W-96)). Position 260 (His-260) interacts with heme b.

The protein belongs to the peroxidase family. Peroxidase/catalase subfamily. As to quaternary structure, homodimer or homotetramer. Requires heme b as cofactor. Formation of the three residue Trp-Tyr-Met cross-link is important for the catalase, but not the peroxidase activity of the enzyme.

It carries out the reaction H2O2 + AH2 = A + 2 H2O. It catalyses the reaction 2 H2O2 = O2 + 2 H2O. Its function is as follows. Bifunctional enzyme with both catalase and broad-spectrum peroxidase activity. This is Catalase-peroxidase from Acidobacterium capsulatum (strain ATCC 51196 / DSM 11244 / BCRC 80197 / JCM 7670 / NBRC 15755 / NCIMB 13165 / 161).